We begin with the raw amino-acid sequence, 559 residues long: Paxillin (559 aa).

Residues 3 to 15 (DLDALLADLESTT) carry the LD motif 1 motif. The disordered stretch occupies residues 17–139 (HISKRPVFLT…SPTMTSTSLG (123 aa)). Phosphotyrosine is present on Tyr31. A compositionally biased stretch (pro residues) spans 45 to 54 (VPPPVPPPPS). A compositionally biased stretch (low complexity) spans 79–98 (QQPQSQSPIYSSSAKSSSAS). Tyr118 carries the post-translational modification Phosphotyrosine; by FAK1. Polar residues predominate over residues 121–137 (PNKQKSAEPSPTMTSTS). An LD motif 2 motif is present at residues 144–156 (ELDRLLLELNAVQ). Disordered stretches follow at residues 158–213 (NPPS…GIED) and 225–262 (LESSVPSPVPAITVSQGEVSSPQRVNASQQQTRISASS). An LD motif 3 motif is present at residues 217–229 (SVESLLDELESSV). Positions 237–262 (TVSQGEVSSPQRVNASQQQTRISASS) are enriched in polar residues. The tract at residues 263 to 282 (ATRELDELMASLSDFKFMAQ) is required for binding to PARVA and ILK. 2 short sequence motifs (LD motif) span residues 266 to 277 (ELDELMASLSDF) and 301 to 313 (QLDTMLGSLQSDL). The disordered stretch occupies residues 281–301 (AQGKAGGSSSPPSTTPKPGSQ). LIM zinc-binding domains follow at residues 326-376 (CGAC…CEKD), 385-435 (CYYC…CRKD), 444-494 (CGGC…CEVH), and 503-553 (CSGC…CQNC).

Interacts (via LD motif 4) with PARVA/PARVIN and ILK. In terms of processing, phosphorylated on tyrosine residues during integrin-mediated cell adhesion, embryonic development, fibroblast transformation and following stimulation of cells by mitogens.

It is found in the cytoplasm. Its subcellular location is the cytoskeleton. It localises to the cell junction. The protein localises to the focal adhesion. The protein resides in the cell cortex. Functionally, cytoskeletal protein involved in actin-membrane attachment at sites of cell adhesion to the extracellular matrix (focal adhesion). Binds in vitro to vinculin as well as to the SH3 domain of c-SRC and, when tyrosine phosphorylated, to the SH2 domain of v-CRK. The protein is Paxillin (PXN) of Gallus gallus (Chicken).